Here is a 141-residue protein sequence, read N- to C-terminus: Large ribosomal subunit protein bL17 (141 aa).

The protein belongs to the bacterial ribosomal protein bL17 family. In terms of assembly, part of the 50S ribosomal subunit. Contacts protein L32.

The chain is Large ribosomal subunit protein bL17 from Sinorhizobium medicae (strain WSM419) (Ensifer medicae).